We begin with the raw amino-acid sequence, 339 residues long: MASSPPIYNLEQYGTNCSEEYSNFYENSKYWIQCLWLIPTLFLLVWIIITTRVRYPSQYSNLPYWILTADCVVSIILILLDLFVVRLFLYFPQLCSKFSTIFINYPIISDIYFPIYNYARVFKTGSQCGMILSRLFCVLIPFGHDEKLRRHIPLFLTIICILPILVVWNTVISEKEVVFWYGGFFVIYHRRVGWVSLSKLHLTFIFVSISFILISSLLLMRHLPIESAVNAERRVITNSIFIIVAFFFQAAFQSFYAFFRYTDWYPRFLVDFQFIIYDVMTVGYPLIFLNFAKEFRNHVFLKSNRKGRTLMELRSMSKPFNNTMPRQESPSPNYDSILA.

The next 7 membrane-spanning stretches (helical) occupy residues 30-50, 65-85, 98-118, 152-172, 200-220, 239-259, and 268-288; these read YWIQ…IIIT, WILT…LFVV, FSTI…IYNY, IPLF…NTVI, LHLT…LLLM, SIFI…YAFF, and FLVD…PLIF. Residues 319 to 339 form a disordered region; sequence PFNNTMPRQESPSPNYDSILA.

The protein belongs to the nematode receptor-like protein srg family.

The protein resides in the membrane. In Caenorhabditis elegans, this protein is Serpentine receptor class gamma-7 (srg-7).